A 153-amino-acid polypeptide reads, in one-letter code: Small heat shock protein HspB (153 aa).

The region spanning 30–140 (AGTEDNYPPC…KPRRISISGS (111 aa)) is the sHSP domain.

Belongs to the small heat shock protein (HSP20) family.

The polypeptide is Small heat shock protein HspB (hspB) (Bradyrhizobium diazoefficiens (strain JCM 10833 / BCRC 13528 / IAM 13628 / NBRC 14792 / USDA 110)).